The following is a 413-amino-acid chain: Sulfoquinovose isomerase (413 aa).

R55, Y111, N172, H176, and R238 together coordinate 6-sulfo-beta-D-quinovose. Catalysis depends on H248, which acts as the Proton donor/acceptor. The 6-sulfo-beta-D-quinovose site is built by E251, Q362, Q379, and H383. H383 serves as the catalytic Proton donor/acceptor.

This sequence belongs to the N-acylglucosamine 2-epimerase family. In terms of assembly, homohexamer.

The catalysed reaction is 6-sulfo-beta-D-quinovose = 6-deoxy-6-sulfo-D-fructose. The enzyme catalyses 6-sulfo-beta-D-quinovose = 6-sulfo-D-rhamnose. Its activity is regulated as follows. Significantly inhibited by Cu(2+), Fe(3+) and Co(2+). Partially inhibited by Mg(2+), Ca(2+) and Mn(2+). Also inhibited by ATP, ADP, dATP, TTP and GTP. In terms of biological role, catalyzes the isomerization of sulfoquinovose (SQ) to 6-deoxy-6-sulfo-D-fructose (SF). Can also catalyze the interconversion of SQ and sulforhamnose (SR). Has a clear preference for beta-SQ and little-to-no activity on alpha-SQ. In vitro, can also catalyze the interconversion of mannose, fructose and glucose, or lyxose and xylulose, but has extremely low activity with glucose. The polypeptide is Sulfoquinovose isomerase (yihS) (Escherichia coli (strain K12)).